A 209-amino-acid chain; its full sequence is PRA1 family protein A3 (209 aa).

4 consecutive transmembrane segments (helical) span residues 51–72, 76–98, 143–163, and 164–184; these read LYYYRTNYFILFVFVLGLALIT, AILGAALTALSLAFLNDSFAATF, LVFVLLGLTASFVLWFTSCGL, and LWVLYALTTALLMILLHASLR.

Belongs to the PRA1 family.

The protein resides in the endosome membrane. Its function is as follows. May be involved in both secretory and endocytic intracellular trafficking in the endosomal/prevacuolar compartments. The chain is PRA1 family protein A3 (PRA1A3) from Arabidopsis thaliana (Mouse-ear cress).